The sequence spans 56 residues: Large ribosomal subunit protein bL33 (56 aa).

Residues 1–12 (MASKGGRDKIKL) show a composition bias toward basic and acidic residues. The disordered stretch occupies residues 1-30 (MASKGGRDKIKLESTAGTGHFYTTTKNKRT). Over residues 15-25 (TAGTGHFYTTT) the composition is skewed to polar residues.

This sequence belongs to the bacterial ribosomal protein bL33 family.

The chain is Large ribosomal subunit protein bL33 from Ralstonia nicotianae (strain ATCC BAA-1114 / GMI1000) (Ralstonia solanacearum).